Here is a 272-residue protein sequence, read N- to C-terminus: Putative hydro-lyase RPB_3621 (272 aa).

It belongs to the D-glutamate cyclase family.

This chain is Putative hydro-lyase RPB_3621, found in Rhodopseudomonas palustris (strain HaA2).